Reading from the N-terminus, the 237-residue chain is Uridylate kinase (237 aa).

11-14 (KLSG) provides a ligand contact to ATP. Gly-53 contributes to the UMP binding site. 2 residues coordinate ATP: Gly-54 and Arg-58. UMP contacts are provided by residues Asp-73 and 134-141 (TGNPFFTT). Residues Thr-161, Tyr-167, and Asp-170 each contribute to the ATP site.

It belongs to the UMP kinase family. Homohexamer.

The protein localises to the cytoplasm. It catalyses the reaction UMP + ATP = UDP + ADP. It functions in the pathway pyrimidine metabolism; CTP biosynthesis via de novo pathway; UDP from UMP (UMPK route): step 1/1. With respect to regulation, inhibited by UTP. Its function is as follows. Catalyzes the reversible phosphorylation of UMP to UDP. This is Uridylate kinase from Burkholderia ambifaria (strain ATCC BAA-244 / DSM 16087 / CCUG 44356 / LMG 19182 / AMMD) (Burkholderia cepacia (strain AMMD)).